A 174-amino-acid polypeptide reads, in one-letter code: Nucleoside-triphosphatase THEP1 (174 aa).

ATP-binding positions include 7–14 (GRPGVGKT) and 94–101 (LIIIDEIG).

This sequence belongs to the THEP1 NTPase family.

The catalysed reaction is a ribonucleoside 5'-triphosphate + H2O = a ribonucleoside 5'-diphosphate + phosphate + H(+). In terms of biological role, has nucleotide phosphatase activity towards ATP, GTP, CTP, TTP and UTP. May hydrolyze nucleoside diphosphates with lower efficiency. The protein is Nucleoside-triphosphatase THEP1 of Thermotoga sp. (strain RQ2).